A 279-amino-acid polypeptide reads, in one-letter code: Shikimate dehydrogenase (NADP(+)) (279 aa).

Residues 18-20 and threonine 64 contribute to the shikimate site; that span reads SRS. The active-site Proton acceptor is the lysine 68. Glutamate 80 contacts NADP(+). Residues asparagine 89 and aspartate 104 each coordinate shikimate. Residues 129 to 133, 153 to 158, and isoleucine 218 contribute to the NADP(+) site; these read GAGGA and NRTVSR. Tyrosine 220 serves as a coordination point for shikimate. NADP(+) is bound at residue glycine 241.

This sequence belongs to the shikimate dehydrogenase family. In terms of assembly, homodimer.

It carries out the reaction shikimate + NADP(+) = 3-dehydroshikimate + NADPH + H(+). It participates in metabolic intermediate biosynthesis; chorismate biosynthesis; chorismate from D-erythrose 4-phosphate and phosphoenolpyruvate: step 4/7. Involved in the biosynthesis of the chorismate, which leads to the biosynthesis of aromatic amino acids. Catalyzes the reversible NADPH linked reduction of 3-dehydroshikimate (DHSA) to yield shikimate (SA). The chain is Shikimate dehydrogenase (NADP(+)) from Chelativorans sp. (strain BNC1).